Consider the following 135-residue polypeptide: Fatty acid-binding protein 5 (135 aa).

A2 carries the post-translational modification N-acetylalanine. S3 carries the phosphoserine modification. Residues 24–34 (KELGVGLALRK) carry the Nuclear localization signal motif. Residues C43 and R109 each coordinate N-eicosanoyl ethanolamine. An intrachain disulfide couples C120 to C127. 129 to 131 (RVY) serves as a coordination point for (9Z,12Z)-octadecadienoate. An N-eicosanoyl ethanolamine-binding site is contributed by Y131. Y131 is a binding site for hexadecanoate. Y131 bears the Phosphotyrosine mark.

Belongs to the calycin superfamily. Fatty-acid binding protein (FABP) family. Monomer.

The protein resides in the cytoplasm. The protein localises to the nucleus. Its subcellular location is the synapse. It is found in the postsynaptic density. It localises to the secreted. The catalysed reaction is hexadecanoate(out) = hexadecanoate(in). It catalyses the reaction (9Z,12Z)-octadecadienoate(out) = (9Z,12Z)-octadecadienoate(in). The enzyme catalyses (9Z)-octadecenoate(out) = (9Z)-octadecenoate(in). Intracellular carrier for long-chain fatty acids and related active lipids, such as endocannabinoids, that regulate the metabolism and actions of the ligands they bind. In addition to the cytosolic transport, selectively delivers specific fatty acids from the cytosol to the nucleus, wherein they activate nuclear receptors. Delivers retinoic acid to the nuclear receptor peroxisome proliferator-activated receptor delta; which promotes proliferation and survival. May also serve as a synaptic carrier of endocannabinoid at central synapses and thus controls retrograde endocannabinoid signaling. Modulates inflammation by regulating PTGES induction via NF-kappa-B activation, and prostaglandin E2 (PGE2) biosynthesis during inflammation. This is Fatty acid-binding protein 5 from Rattus norvegicus (Rat).